The chain runs to 191 residues: Peptidyl-tRNA hydrolase (191 aa).

Y14 is a tRNA binding site. The Proton acceptor role is filled by H19. Residues Y64, N66, and N112 each coordinate tRNA.

This sequence belongs to the PTH family. Monomer.

It is found in the cytoplasm. The enzyme catalyses an N-acyl-L-alpha-aminoacyl-tRNA + H2O = an N-acyl-L-amino acid + a tRNA + H(+). Its function is as follows. Hydrolyzes ribosome-free peptidyl-tRNAs (with 1 or more amino acids incorporated), which drop off the ribosome during protein synthesis, or as a result of ribosome stalling. Catalyzes the release of premature peptidyl moieties from peptidyl-tRNA molecules trapped in stalled 50S ribosomal subunits, and thus maintains levels of free tRNAs and 50S ribosomes. The polypeptide is Peptidyl-tRNA hydrolase (Clostridium beijerinckii (strain ATCC 51743 / NCIMB 8052) (Clostridium acetobutylicum)).